The sequence spans 116 residues: Non-specific lipid-transfer protein 10 (116 aa).

The signal sequence occupies residues 1-22 (MMRVVLPLCLLLASIFAWGSEA). Disulfide bonds link Cys26–Cys73, Cys36–Cys50, Cys51–Cys98, and Cys71–Cys112.

It belongs to the plant LTP family.

In terms of biological role, plant non-specific lipid-transfer proteins transfer phospholipids as well as galactolipids across membranes. May play a role in wax or cutin deposition in the cell walls of expanding epidermal cells and certain secretory tissues. This chain is Non-specific lipid-transfer protein 10 (LTP10), found in Arabidopsis thaliana (Mouse-ear cress).